Reading from the N-terminus, the 571-residue chain is Phosphomethylpyrimidine synthase (571 aa).

Residues asparagine 201, methionine 230, tyrosine 259, histidine 295, 315-317 (SRG), 356-359 (DALR), and glutamate 395 each bind substrate. Residue histidine 399 coordinates Zn(2+). Substrate is bound at residue tyrosine 422. Histidine 463 provides a ligand contact to Zn(2+). [4Fe-4S] cluster-binding residues include cysteine 545, cysteine 548, and cysteine 553.

This sequence belongs to the ThiC family. [4Fe-4S] cluster is required as a cofactor.

It catalyses the reaction 5-amino-1-(5-phospho-beta-D-ribosyl)imidazole + S-adenosyl-L-methionine = 4-amino-2-methyl-5-(phosphooxymethyl)pyrimidine + CO + 5'-deoxyadenosine + formate + L-methionine + 3 H(+). It participates in cofactor biosynthesis; thiamine diphosphate biosynthesis. Functionally, catalyzes the synthesis of the hydroxymethylpyrimidine phosphate (HMP-P) moiety of thiamine from aminoimidazole ribotide (AIR) in a radical S-adenosyl-L-methionine (SAM)-dependent reaction. The protein is Phosphomethylpyrimidine synthase of Chlorobium phaeovibrioides (strain DSM 265 / 1930) (Prosthecochloris vibrioformis (strain DSM 265)).